Here is a 596-residue protein sequence, read N- to C-terminus: Elongation factor 4 (596 aa).

Residues 2–183 (KNIRNFSIIA…EIIRRIPAPN (182 aa)) enclose the tr-type G domain. Residues 14–19 (DHGKST) and 130–133 (NKID) contribute to the GTP site.

It belongs to the TRAFAC class translation factor GTPase superfamily. Classic translation factor GTPase family. LepA subfamily.

Its subcellular location is the cell inner membrane. The catalysed reaction is GTP + H2O = GDP + phosphate + H(+). Required for accurate and efficient protein synthesis under certain stress conditions. May act as a fidelity factor of the translation reaction, by catalyzing a one-codon backward translocation of tRNAs on improperly translocated ribosomes. Back-translocation proceeds from a post-translocation (POST) complex to a pre-translocation (PRE) complex, thus giving elongation factor G a second chance to translocate the tRNAs correctly. Binds to ribosomes in a GTP-dependent manner. This chain is Elongation factor 4, found in Wolinella succinogenes (strain ATCC 29543 / DSM 1740 / CCUG 13145 / JCM 31913 / LMG 7466 / NCTC 11488 / FDC 602W) (Vibrio succinogenes).